A 316-amino-acid chain; its full sequence is Protein C4 (316 aa).

It belongs to the poxviridae OPG031 protein family.

The protein resides in the host cytoplasm. Its subcellular location is the host nucleus. Plays a role in the inhibition of host NF-kappa-B activation. Mechanistically, blocks the subunit p65/RELA translocation into the host nucleus. In Homo sapiens (Human), this protein is Protein C4 (OPG031).